We begin with the raw amino-acid sequence, 118 residues long: MNINICGVLISKKKNIVFGLTKIYGIGYSMSLKICSKIENFKNKKFKDLTNEEKAKIENFINKINVENNLKTIIKENFKKKLNLNSYKSLRHKKKLPCRGQRTKTNAKTRKKMNHEII.

The protein belongs to the universal ribosomal protein uS13 family. Part of the 30S ribosomal subunit. Forms a loose heterodimer with protein S19. Forms two bridges to the 50S subunit in the 70S ribosome.

Functionally, located at the top of the head of the 30S subunit, it contacts several helices of the 16S rRNA. In the 70S ribosome it contacts the 23S rRNA (bridge B1a) and protein L5 of the 50S subunit (bridge B1b), connecting the 2 subunits; these bridges are implicated in subunit movement. Contacts the tRNAs in the A and P-sites. The sequence is that of Small ribosomal subunit protein uS13 from Carsonella ruddii (strain PV).